The primary structure comprises 318 residues: Cytochrome c biogenesis protein CcsA (318 aa).

Helical transmembrane passes span 17–37 (VLAL…ISFW), 45–65 (SAVV…QLVL), 75–95 (ISNL…AQLL), 104–124 (IVSA…SFAL), 149–169 (VIMC…AVLF), 224–244 (TITV…VWAN), 258–275 (TWAL…HTRF), and 287–307 (VAVA…LLGI).

It belongs to the CcmF/CycK/Ccl1/NrfE/CcsA family. May interact with ccs1.

The protein localises to the cellular thylakoid membrane. Functionally, required during biogenesis of c-type cytochromes (cytochrome c6 and cytochrome f) at the step of heme attachment. In Prochlorococcus marinus (strain MIT 9303), this protein is Cytochrome c biogenesis protein CcsA.